The primary structure comprises 521 residues: Histone acetyltransferase ESA1 (521 aa).

Positions 1-32 are disordered; it reads MSVGEDKSGTATPQHNTSIRITDDEERSDEKK. Residues 9 to 20 are compositionally biased toward polar residues; the sequence is GTATPQHNTSIR. The 52-residue stretch at 39–90 folds into the Tudor-knot domain; the sequence is ITGCKLYVSKDGEYRLAEILQDHMKKGKKVFYVHYQEFNKRLDEWISADRID. The segment at 100–154 is disordered; it reads VKVDKKDDKKEGKSKTSKKSKSKNGKTGSKSVTSTPQPNEDTAPGTPRNDDEMDL. Residues 101-113 are compositionally biased toward basic and acidic residues; sequence KVDKKDDKKEGKS. Basic residues predominate over residues 114 to 123; sequence KTSKKSKSKN. A compositionally biased stretch (low complexity) spans 124 to 133; it reads GKTGSKSVTS. In terms of domain architecture, MYST-type HAT spans 192–509; the sequence is ARVRNLSSVI…LDPSKLSWTP (318 aa). The C2HC MYST-type; degenerate zinc finger occupies 225–250; that stretch reads IYICDFTLAYFGSLKQFERFRTKCSM. The ESA1-RPD3 motif signature appears at 275 to 296; that stretch reads RTWCRNLCLLSKLFLDHKTLYY. Residue K292 is modified to N6-acetyllysine; by autocatalysis. Acetyl-CoA-binding positions include 333–337 and 342–348; these read ACILT and QKMGFGK. The active-site Proton donor/acceptor is E368. Position 372 (S372) interacts with acetyl-CoA. 2 stretches are compositionally biased toward polar residues: residues 403-418 and 426-436; these read NNPQ…DSSV and QSANIQNGNTP. Positions 403-438 are disordered; it reads NNPQLLTEASSKDSSVSPPPGGRQSANIQNGNTPSS.

It belongs to the MYST (SAS/MOZ) family. Component of the NuA4 histone acetyltransferase complex. Post-translationally, autoacetylation at Lys-292 is required for proper function.

The protein resides in the nucleus. It localises to the chromosome. It carries out the reaction L-lysyl-[histone] + acetyl-CoA = N(6)-acetyl-L-lysyl-[histone] + CoA + H(+). The enzyme catalyses L-lysyl-[protein] + acetyl-CoA = N(6)-acetyl-L-lysyl-[protein] + CoA + H(+). The catalysed reaction is 2-hydroxyisobutanoyl-CoA + L-lysyl-[protein] = N(6)-(2-hydroxyisobutanoyl)-L-lysyl-[protein] + CoA + H(+). It catalyses the reaction (2E)-butenoyl-CoA + L-lysyl-[protein] = N(6)-(2E)-butenoyl-L-lysyl-[protein] + CoA + H(+). Its function is as follows. Catalytic component of the NuA4 histone acetyltransferase (HAT) complex which is involved in epigenetic transcriptional activation of selected genes principally by acetylation of nucleosomal histones H4, H3, H2B, H2A and H2A variant H2A.Z. Acetylates histone H4 to form H4K5ac, H4K8ac, H4K12ac and H4K16ac, histone H3 to form H3K14ac, and histone H2A to form H2AK4ac and H2AK7ac. The NuA4 complex is involved in the DNA damage response and is required for chromosome segregation. The NuA4 complex plays a direct role in repair of DNA double-strand breaks (DSBs) through homologous recombination. Recruitment to promoters depends on H3K4me. Also acetylates non-histone proteins. In addition to protein acetyltransferase, can use different acyl-CoA substrates, such as 2-hydroxyisobutanoyl-CoA (2-hydroxyisobutyryl-CoA) or (2E)-butenoyl-CoA (crotonyl-CoA), and is able to mediate protein 2-hydroxyisobutyrylation and crotonylation, respectively. This is Histone acetyltransferase ESA1 (ESA1) from Debaryomyces hansenii (strain ATCC 36239 / CBS 767 / BCRC 21394 / JCM 1990 / NBRC 0083 / IGC 2968) (Yeast).